A 454-amino-acid chain; its full sequence is Bifunctional protein GlmU (454 aa).

The tract at residues methionine 1–arginine 226 is pyrophosphorylase. Residues leucine 7–glycine 10, lysine 21, glutamine 73, and glycine 78–threonine 79 each bind UDP-N-acetyl-alpha-D-glucosamine. Aspartate 103 serves as a coordination point for Mg(2+). UDP-N-acetyl-alpha-D-glucosamine is bound by residues glycine 140, glutamate 155, asparagine 170, and asparagine 224. Residue asparagine 224 participates in Mg(2+) binding. Positions arginine 227–glutamate 247 are linker. The tract at residues glycine 248–serine 454 is N-acetyltransferase. Positions 329 and 347 each coordinate UDP-N-acetyl-alpha-D-glucosamine. Residue histidine 359 is the Proton acceptor of the active site. UDP-N-acetyl-alpha-D-glucosamine contacts are provided by tyrosine 362 and asparagine 373. Alanine 376, alanine 419, and arginine 436 together coordinate acetyl-CoA.

The protein in the N-terminal section; belongs to the N-acetylglucosamine-1-phosphate uridyltransferase family. This sequence in the C-terminal section; belongs to the transferase hexapeptide repeat family. In terms of assembly, homotrimer. Mg(2+) is required as a cofactor.

The protein resides in the cytoplasm. It catalyses the reaction alpha-D-glucosamine 1-phosphate + acetyl-CoA = N-acetyl-alpha-D-glucosamine 1-phosphate + CoA + H(+). The enzyme catalyses N-acetyl-alpha-D-glucosamine 1-phosphate + UTP + H(+) = UDP-N-acetyl-alpha-D-glucosamine + diphosphate. It functions in the pathway nucleotide-sugar biosynthesis; UDP-N-acetyl-alpha-D-glucosamine biosynthesis; N-acetyl-alpha-D-glucosamine 1-phosphate from alpha-D-glucosamine 6-phosphate (route II): step 2/2. Its pathway is nucleotide-sugar biosynthesis; UDP-N-acetyl-alpha-D-glucosamine biosynthesis; UDP-N-acetyl-alpha-D-glucosamine from N-acetyl-alpha-D-glucosamine 1-phosphate: step 1/1. It participates in bacterial outer membrane biogenesis; LPS lipid A biosynthesis. In terms of biological role, catalyzes the last two sequential reactions in the de novo biosynthetic pathway for UDP-N-acetylglucosamine (UDP-GlcNAc). The C-terminal domain catalyzes the transfer of acetyl group from acetyl coenzyme A to glucosamine-1-phosphate (GlcN-1-P) to produce N-acetylglucosamine-1-phosphate (GlcNAc-1-P), which is converted into UDP-GlcNAc by the transfer of uridine 5-monophosphate (from uridine 5-triphosphate), a reaction catalyzed by the N-terminal domain. In Synechococcus sp. (strain CC9311), this protein is Bifunctional protein GlmU.